The chain runs to 417 residues: Calreticulin (417 aa).

Positions 1 to 17 (MLLSVPLLLGLLGLAAA) are cleaved as a signal peptide. The segment at 18–197 (EPAVYFKEQF…NSQVESGSLE (180 aa)) is N-domain. Gln-26 contacts Ca(2+). An N6-acetyllysine modification is found at Lys-48. The Ca(2+) site is built by Lys-62 and Lys-64. Cysteines 105 and 137 form a disulfide. Positions 109, 111, 128, and 135 each coordinate an alpha-D-glucoside. At Lys-159 the chain carries N6-acetyllysine. A 1-1 repeat occupies 191 to 202 (VESGSLEDDWDF). Positions 191-255 (VESGSLEDDW…DAKKPEDWDE (65 aa)) are 4 X approximate repeats. Positions 193–278 (SGSLEDDWDF…PEYKGEWKPR (86 aa)) are disordered. The segment at 198 to 308 (DDWDFLPPKK…YSPDPSIYAY (111 aa)) is P-domain. The span at 207-251 (KIKDPDASKPEDWDERAKIDDPTDSKPEDWDKPEHIPDPDAKKPE) shows a compositional bias: basic and acidic residues. Position 209 is an N6-acetyllysine (Lys-209). Tandem repeats lie at residues 210–221 (DPDASKPEDWDE), 227–238 (DPTDSKPEDWDK), 244–255 (DPDAKKPEDWDE), 259–269 (GEWEPPVIQNP), 273–283 (GEWKPRQIDNP), and 287–297 (GTWIHPEIDNP). Residues 237-270 (DKPEHIPDPDAKKPEDWDEEMDGEWEPPVIQNPE) form an interaction with PPIB region. Residues 252–261 (DWDEEMDGEW) show a composition bias toward acidic residues. Residues 259–297 (GEWEPPVIQNPEYKGEWKPRQIDNPDYKGTWIHPEIDNP) are 3 X approximate repeats. The C-domain stretch occupies residues 309–417 (DNFGVLGLDL…DVPGQAKDEL (109 aa)). Asp-317 serves as a coordination point for an alpha-D-glucoside. Asp-328 is a binding site for Ca(2+). The disordered stretch occupies residues 350 to 417 (TKAAEKQMKD…DVPGQAKDEL (68 aa)). Over residues 352–379 (AAEKQMKDKQDEEQRLKEEEEDKKRKEE) the composition is skewed to basic and acidic residues. Over residues 380–409 (EEAEDKEDDEDKDEDEEDEEDKEEDEEEDV) the composition is skewed to acidic residues. The Prevents secretion from ER motif lies at 414–417 (KDEL).

This sequence belongs to the calreticulin family. Monomer. Component of an EIF2 complex at least composed of CELF1/CUGBP1, CALR, CALR3, EIF2S1, EIF2S2, HSP90B1 and HSPA5. Interacts with PDIA3/ERp57 and SPACA9. Interacts with TRIM21. Interacts with NR3C1. Interacts with PPIB. Interacts (via P-domain) with PDIA5. Interacts with GABARAP. Interacts with CLCC1.

It localises to the endoplasmic reticulum lumen. It is found in the cytoplasm. Its subcellular location is the cytosol. The protein resides in the secreted. The protein localises to the extracellular space. It localises to the extracellular matrix. It is found in the cell surface. Its subcellular location is the sarcoplasmic reticulum lumen. The protein resides in the cytoplasmic vesicle. The protein localises to the secretory vesicle. It localises to the cortical granule. It is found in the cytoplasmic granule. In terms of biological role, calcium-binding chaperone that promotes folding, oligomeric assembly and quality control in the endoplasmic reticulum (ER) via the calreticulin/calnexin cycle. This lectin interacts transiently with almost all of the monoglucosylated glycoproteins that are synthesized in the ER. Interacts with the DNA-binding domain of NR3C1 and mediates its nuclear export. Involved in maternal gene expression regulation. May participate in oocyte maturation via the regulation of calcium homeostasis. The sequence is that of Calreticulin (CALR) from Chlorocebus aethiops (Green monkey).